The sequence spans 374 residues: Chaperone protein DnaJ (374 aa).

The region spanning 5–70 is the J domain; that stretch reads DFYEILGLGK…QKRDAYDRYG (66 aa). Residues 28 to 47 form a disordered region; it reads LAMKHHPDRNPDSKGAEDKF. Residues 35–47 are compositionally biased toward basic and acidic residues; the sequence is DRNPDSKGAEDKF. The CR-type zinc-finger motif lies at 134-212; it reads GYDTTIRVPS…CSGAGKIKRN (79 aa). Zn(2+)-binding residues include Cys147, Cys150, Cys164, Cys167, Cys186, Cys189, Cys200, and Cys203. 4 CXXCXGXG motif repeats span residues 147–154, 164–171, 186–193, and 200–207; these read CETCDGSG, CTTCGGHG, CPKCHGSG, and CTACSGAG.

It belongs to the DnaJ family. Homodimer. It depends on Zn(2+) as a cofactor.

It is found in the cytoplasm. Its function is as follows. Participates actively in the response to hyperosmotic and heat shock by preventing the aggregation of stress-denatured proteins and by disaggregating proteins, also in an autonomous, DnaK-independent fashion. Unfolded proteins bind initially to DnaJ; upon interaction with the DnaJ-bound protein, DnaK hydrolyzes its bound ATP, resulting in the formation of a stable complex. GrpE releases ADP from DnaK; ATP binding to DnaK triggers the release of the substrate protein, thus completing the reaction cycle. Several rounds of ATP-dependent interactions between DnaJ, DnaK and GrpE are required for fully efficient folding. Also involved, together with DnaK and GrpE, in the DNA replication of plasmids through activation of initiation proteins. This Herminiimonas arsenicoxydans protein is Chaperone protein DnaJ.